A 521-amino-acid chain; its full sequence is Glucose-1-phosphate adenylyltransferase small subunit, chloroplastic (521 aa).

Residues 1 to 24 (MAASIGALKSSPSSHNCINERRND) form a disordered region. A chloroplast-targeting transit peptide spans 1 to 72 (MAASIGALKS…RSPLIVSPKA (72 aa)).

It belongs to the bacterial/plant glucose-1-phosphate adenylyltransferase family. As to quaternary structure, heterotetramer.

The protein localises to the plastid. Its subcellular location is the chloroplast. It carries out the reaction alpha-D-glucose 1-phosphate + ATP + H(+) = ADP-alpha-D-glucose + diphosphate. Its pathway is glycan biosynthesis; starch biosynthesis. With respect to regulation, activated by 3'phosphoglycerate, inhibited by orthophosphate. Allosteric regulation. Functionally, this protein plays a role in synthesis of starch. It catalyzes the synthesis of the activated glycosyl donor, ADP-glucose from Glc-1-P and ATP. This chain is Glucose-1-phosphate adenylyltransferase small subunit, chloroplastic, found in Solanum lycopersicum (Tomato).